Consider the following 275-residue polypeptide: Formamidopyrimidine-DNA glycosylase (275 aa).

Residue Pro-2 is the Schiff-base intermediate with DNA of the active site. Residue Glu-3 is the Proton donor of the active site. The active-site Proton donor; for beta-elimination activity is the Lys-59. Positions 92, 111, and 155 each coordinate DNA. The segment at 240-274 adopts an FPG-type zinc-finger fold; sequence YVYGQTGEPCRRCGHEIEKMKLGGRGTHYCPHCQQ. Catalysis depends on Arg-264, which acts as the Proton donor; for delta-elimination activity.

This sequence belongs to the FPG family. In terms of assembly, monomer. Zn(2+) is required as a cofactor.

It catalyses the reaction Hydrolysis of DNA containing ring-opened 7-methylguanine residues, releasing 2,6-diamino-4-hydroxy-5-(N-methyl)formamidopyrimidine.. The enzyme catalyses 2'-deoxyribonucleotide-(2'-deoxyribose 5'-phosphate)-2'-deoxyribonucleotide-DNA = a 3'-end 2'-deoxyribonucleotide-(2,3-dehydro-2,3-deoxyribose 5'-phosphate)-DNA + a 5'-end 5'-phospho-2'-deoxyribonucleoside-DNA + H(+). Functionally, involved in base excision repair of DNA damaged by oxidation or by mutagenic agents. Acts as a DNA glycosylase that recognizes and removes damaged bases. Has a preference for oxidized purines, such as 7,8-dihydro-8-oxoguanine (8-oxoG). Has AP (apurinic/apyrimidinic) lyase activity and introduces nicks in the DNA strand. Cleaves the DNA backbone by beta-delta elimination to generate a single-strand break at the site of the removed base with both 3'- and 5'-phosphates. In Exiguobacterium sp. (strain ATCC BAA-1283 / AT1b), this protein is Formamidopyrimidine-DNA glycosylase.